Here is a 585-residue protein sequence, read N- to C-terminus: MAAVELEWIPETLYNTAISAVVDNYIRSRRDIRSLPENIQFDVYYKLYQQGRLCQLGSEFCELEVFAKVLRALDKRHLLHHCFQALMDHGVKVASVLAYSFSRRCSYIAESDAAVKEKAIQVGFVLGGFLSDAGWYSDAEKVFLSCLQLCTLHDEMLHWFRAVECCVRLLHVRNGNCKYHLGEETFKLAQTYMDKLSKHGQQANRAALYGELCALLFAKSHYDEAYKWCVEAMKEITSGLPVKVVVDVLRQASKACVVKREFKKAEQLIKHAVYLARDHFGSKHPKYSDTLLDYGFYLLNVDNICQSVAIYQAALDIRQSVFGGKNIHVATAHEDLAYSSYVHQYSSGKFDNALFHAERAIGIITHILPEDHLLLASSKRVKALILEEIAIDCHNKETEQRLLQEAHDLHLSSLQLAKKAFGEFNVQTAKHYGNLGRLYQSMRKFKEAEEMHIKAIQIKEQLLGQEDYEVALSVGHLASLYNYDMNQYENAEKLYLRSIAIGKKLFGEGYSGLEYDYRGLIKLYNSTGNYEKVFEYHNVLSNWNRLRDRQYSVTDALEDVNSSPQSTEEVVQSFLMSQNVEGPSC.

TPR repeat units lie at residues 50–83, 120–153, 206–239, 288–321, 333–367, 429–462, 471–505, and 514–547; these read QGRL…HHCF, IQVG…CTLH, AALY…ITSG, SDTL…RQSV, HEDL…ITHI, AKHY…KEQL, ALSV…GKKL, and EYDY…NRLR.

Component of a CRL2 E3 ubiquitin-protein ligase complex, also named ECS (Elongin BC-CUL2/5-SOCS-box protein) complex, composed of CUL2, Elongin BC (ELOB and ELOC), RBX1 and substrate-specific adapter APPBP2. Interacts with APP; APP interaction inhibits the E3 ubiquitin-protein ligase activity of the CRL2(APPBP2) complex. Rapidly degraded by the proteasome upon overexpression of a C-terminal fragment of APP.

The protein resides in the nucleus. It localises to the cytoplasm. Its subcellular location is the cytoskeleton. It is found in the membrane. It functions in the pathway protein modification; protein ubiquitination. E3 ubiquitin-protein ligase activity of the CRL2(APPBP2) complex is inhibited by APP. Its function is as follows. Substrate-recognition component of a Cul2-RING (CRL2) E3 ubiquitin-protein ligase complex of the DesCEND (destruction via C-end degrons) pathway, which recognizes a C-degron located at the extreme C terminus of target proteins, leading to their ubiquitination and degradation. The C-degron recognized by the DesCEND pathway is usually a motif of less than ten residues and can be present in full-length proteins, truncated proteins or proteolytically cleaved forms. The CRL2(APPBP2) complex specifically recognizes proteins with a -Arg-Xaa-Xaa-Gly degron at the C-terminus, leading to their ubiquitination and degradation. The CRL2(APPBP2) complex mediates ubiquitination and degradation of truncated SELENOV selenoproteins produced by failed UGA/Sec decoding, which end with a -Arg-Xaa-Xaa-Gly degron. May play a role in intracellular protein transport: may be involved in the translocation of APP along microtubules toward the cell surface. In Rattus norvegicus (Rat), this protein is Amyloid protein-binding protein 2.